Here is a 354-residue protein sequence, read N- to C-terminus: Glycerol-3-phosphate dehydrogenase [NAD(+)], glycosomal (354 aa).

NAD(+) contacts are provided by residues 15-20, Phe-90, Lys-118, and Ala-150; that span reads GSGAFG. Lys-118 is a binding site for substrate. Residue Lys-203 is the Proton acceptor of the active site. Residues Arg-267 and Glu-293 each coordinate NAD(+). Substrate is bound at residue 267–268; the sequence is RN. Positions 352–354 match the Microbody targeting signal motif; that stretch reads SKM.

Belongs to the NAD-dependent glycerol-3-phosphate dehydrogenase family.

It is found in the glycosome. The catalysed reaction is sn-glycerol 3-phosphate + NAD(+) = dihydroxyacetone phosphate + NADH + H(+). The chain is Glycerol-3-phosphate dehydrogenase [NAD(+)], glycosomal (GPD) from Trypanosoma brucei brucei.